A 540-amino-acid polypeptide reads, in one-letter code: MLWGISSALDLYEEYLRAFKIKDDPLPEDEHAREEAEEAAGDNTLNTLNILICGGADPRHVIKTLAKRYTHRIRPKLNIYLLDGCAEIEARNMLLLGVALEDPESFNLVSKVHLFMDLYGNAVIRPSSHHYMAAKGRTLLKMVTNEEELQRLAPMLNIEGLKYKERDGFEMAFTFWQPQPWNVFEVTAYWEQRSRALLGTRYDHRNGAFDWDLSMTLKERGGQQICSQEYRYWRETGVAFVFPEYEHCKPNKTLAVGLVRNGRNFIHRGYVGDIQTGPFCGFGLRTVEERMHHSVHGDNDYRATDITERNLMEFFHELLTQTAYEHDTTRSRRYGSVQLLMTPLLNHQEEDAAGQAAYDKPWIHVPGVTVHFVSPMEMEQLKKGAAHWNNMFDIVFMAYNYYSFLSKDFFQAMRAQSLFILETKLMTVERKDRVQEYESKAKELMKDAGLKAAINYQAINGKNMWLKYKKTDKDEQEDEAVTEAMPESTFKYDTDTDYGEPAEEYTGLVIEEIPSSNQTVAAIKKEVEAEGPLQPKTNFP.

The segment at Ala480–Gly499 is disordered.

It belongs to the DNAAF3 family. As to expression, expressed in mechanosensory chordotonal (Ch) neurons, spermatocytes and spermatids (at protein level).

Its subcellular location is the cytoplasm. It is found in the dynein axonemal particle. Required for the assembly of axonemal inner and outer dynein arms. Involved in the cytoplasmic preassembly of dyneins into complexes before their transport into cilia. Essential for the development of axonemal dynein motors in the sensory cilium of mechanosensory chordotonal (Ch) neurons and sperm flagellum, and consequently, is required for the mechanotransduction process of hearing and sperm mobility. This is Dynein axonemal assembly factor 3 homolog from Drosophila melanogaster (Fruit fly).